Consider the following 93-residue polypeptide: MRLIREDSIEKHLVSEVRKIGGIAYKFVSPGRRGVPDRLVALPNGKIIFVECKAPGEKPTPYQLREHARLFALGHQVIVLDSQDLSSILPAVN.

One can recognise a VRR-NUC domain in the interval 5 to 84 (REDSIEKHLV…HQVIVLDSQD (80 aa)).

The cofactor is Mg(2+).

In terms of biological role, nuclease. The polypeptide is Putative nuclease p44 (44) (Escherichia coli (Bacteriophage APSE-1)).